The chain runs to 85 residues: Small ribosomal subunit protein uS17 (85 aa).

It belongs to the universal ribosomal protein uS17 family. In terms of assembly, part of the 30S ribosomal subunit.

Its function is as follows. One of the primary rRNA binding proteins, it binds specifically to the 5'-end of 16S ribosomal RNA. This chain is Small ribosomal subunit protein uS17, found in Geobacter metallireducens (strain ATCC 53774 / DSM 7210 / GS-15).